The following is a 422-amino-acid chain: L-2-hydroxyglutarate dehydrogenase (422 aa).

It belongs to the L2HGDH family. FAD is required as a cofactor.

The protein localises to the cell inner membrane. It carries out the reaction (S)-2-hydroxyglutarate + a quinone = a quinol + 2-oxoglutarate. The protein operates within amino-acid degradation. Its function is as follows. Catalyzes the dehydrogenation of L-2-hydroxyglutarate (L2HG) to alpha-ketoglutarate and couples to the respiratory chain by feeding electrons from the reaction into the membrane quinone pool. Functions in a L-lysine degradation pathway that proceeds via cadaverine, glutarate and L-2-hydroxyglutarate. This is L-2-hydroxyglutarate dehydrogenase from Escherichia coli (strain K12).